Consider the following 249-residue polypeptide: Mediator of RNA polymerase II transcription subunit 19 (249 aa).

2 disordered regions span residues methionine 1–arginine 68 and glutamine 178–arginine 249. Positions alanine 9 to serine 18 are enriched in low complexity. A compositionally biased stretch (pro residues) spans valine 45–leucine 56. 2 stretches are compositionally biased toward basic residues: residues proline 179–serine 190 and arginine 221–arginine 233.

This sequence belongs to the Mediator complex subunit 19 family. As to quaternary structure, component of the Mediator complex.

It is found in the nucleus. Component of the Mediator complex, a coactivator involved in the regulated transcription of nearly all RNA polymerase II-dependent genes. Mediator functions as a bridge to convey information from gene-specific regulatory proteins to the basal RNA polymerase II transcription machinery. Mediator is recruited to promoters by direct interactions with regulatory proteins and serves as a scaffold for the assembly of a functional preinitiation complex with RNA polymerase II and the general transcription factors. In Xenopus tropicalis (Western clawed frog), this protein is Mediator of RNA polymerase II transcription subunit 19 (med19).